A 157-amino-acid chain; its full sequence is uncharacterized protein (157 aa).

A helical membrane pass occupies residues 6–26; it reads LVGGVLRVLVVVGAVFDVAVL. The 125-residue stretch at 33-157 folds into the Ricin B-type lectin domain; that stretch reads ADGPVQLKSR…APDQQWDSVP (125 aa).

Its subcellular location is the membrane. This is an uncharacterized protein from Mycobacterium tuberculosis (strain CDC 1551 / Oshkosh).